We begin with the raw amino-acid sequence, 122 residues long: Large ribosomal subunit protein uL14 (122 aa).

The protein belongs to the universal ribosomal protein uL14 family. As to quaternary structure, part of the 50S ribosomal subunit. Forms a cluster with proteins L3 and L19. In the 70S ribosome, L14 and L19 interact and together make contacts with the 16S rRNA in bridges B5 and B8.

Binds to 23S rRNA. Forms part of two intersubunit bridges in the 70S ribosome. The chain is Large ribosomal subunit protein uL14 from Listeria monocytogenes serotype 4b (strain CLIP80459).